A 645-amino-acid chain; its full sequence is MARSCKILAKLPRVGTAISNLTNVCEEMRRHIVLATQETAPLFEEAAILMSQQQEVETKEKILDAFNNHFILSEDELSSLTSSAKPVDDLFFDALARMKQIHKDCEVLLGSENQRLGLDIMEQSSKNLNGAFQKLYKWIQKEFKSLNLEDPQISLSIRRALRVLAERPSLFHNCLDSFADAREYTLSDSFHTALTDVPSGQERDMAARPIEFSAHDPLRYVGDMLAWVHSAAVSEREALEALFIGDEGEIAKGIQAGVNNEPWSRVDGEEIVFDGPKALNDLVTRDLNGVTRSLRQRVELVLQGNEDSIVIYKIIGLLAFYENTFSKLLGRESGLVTSVASLQEFAFKHFQILMQDQLAVVSAEPANLTPPADLSTPQFLHDALDNLTSLMKAYDSSFAHEHANDSSGENKFSPIIREALDPFLELAKTSSNDISDPTSRAVFHVNCLLSTRDAISPYPFVCVTHLPQLTNTLKTLRTTLLEIQHEFLLNASGLHILLTALKPFTPPATATLEPTRSSYPPDLATISSLPEFQPQTLSSISQQLDDFLPSALVDVTENLKAIHSPVLVKSVTEEAVEAFCTDFEFVEGMILGADEARGKLVVHGDGEDVGAEEAGEGEGEEPQADNWRLRSLFPRTTGEIRVLLS.

The protein belongs to the COG6 family.

Its subcellular location is the golgi apparatus membrane. In terms of biological role, acts as a component of the peripheral membrane COG complex that is involved in intra-Golgi protein trafficking. COG is located at the cis-Golgi, and regulates tethering of retrograde intra-Golgi vesicles and possibly a number of other membrane trafficking events. The polypeptide is Conserved oligomeric Golgi complex subunit 6 (COG6) (Ajellomyces capsulatus (strain NAm1 / WU24) (Darling's disease fungus)).